A 452-amino-acid chain; its full sequence is Chromosomal replication initiator protein DnaA (452 aa).

The tract at residues 1-72 is domain I, interacts with DnaA modulators; it reads MPDMLTLWTD…LVEYAYQAAH (72 aa). The tract at residues 72–114 is domain II; it reads HEDIQPVLILENERQQQATLKAKTAPVAAGEPVEPTPTFMKET. The segment at 115–331 is domain III, AAA+ region; sequence ALNSRYTFDT…GALARVQAYS (217 aa). 4 residues coordinate ATP: glycine 159, glycine 161, lysine 162, and threonine 163. The tract at residues 332 to 452 is domain IV, binds dsDNA; sequence QLMHQPIATD…IDSLKDDLRR (121 aa).

The protein belongs to the DnaA family. As to quaternary structure, oligomerizes as a right-handed, spiral filament on DNA at oriC.

It is found in the cytoplasm. Functionally, plays an essential role in the initiation and regulation of chromosomal replication. ATP-DnaA binds to the origin of replication (oriC) to initiate formation of the DNA replication initiation complex once per cell cycle. Binds the DnaA box (a 9 base pair repeat at the origin) and separates the double-stranded (ds)DNA. Forms a right-handed helical filament on oriC DNA; dsDNA binds to the exterior of the filament while single-stranded (ss)DNA is stabiized in the filament's interior. The ATP-DnaA-oriC complex binds and stabilizes one strand of the AT-rich DNA unwinding element (DUE), permitting loading of DNA polymerase. After initiation quickly degrades to an ADP-DnaA complex that is not apt for DNA replication. Binds acidic phospholipids. The polypeptide is Chromosomal replication initiator protein DnaA (Levilactobacillus brevis (strain ATCC 367 / BCRC 12310 / CIP 105137 / JCM 1170 / LMG 11437 / NCIMB 947 / NCTC 947) (Lactobacillus brevis)).